Here is a 95-residue protein sequence, read N- to C-terminus: uncharacterized protein (95 aa).

Residues 14 to 50 adopt a coiled-coil conformation; that stretch reads KMEQKLQEQLDGLLEKYTELLLGETNDELKEEVKQWI.

This is an uncharacterized protein from Bacillus subtilis (strain 168).